Consider the following 318-residue polypeptide: Pantothenate kinase (318 aa).

96 to 103 (GSVAVGKS) provides a ligand contact to ATP.

The protein belongs to the prokaryotic pantothenate kinase family.

Its subcellular location is the cytoplasm. The catalysed reaction is (R)-pantothenate + ATP = (R)-4'-phosphopantothenate + ADP + H(+). Its pathway is cofactor biosynthesis; coenzyme A biosynthesis; CoA from (R)-pantothenate: step 1/5. In Bradyrhizobium diazoefficiens (strain JCM 10833 / BCRC 13528 / IAM 13628 / NBRC 14792 / USDA 110), this protein is Pantothenate kinase.